Consider the following 538-residue polypeptide: Cytochrome P450 monooxygenase verH (538 aa).

The chain crosses the membrane as a helical span at residues 2–21 (VFAMLVVCWSIFLGLWMLVS). Cys445 contacts heme.

The protein belongs to the cytochrome P450 family. Heme is required as a cofactor.

It is found in the membrane. The protein operates within secondary metabolite biosynthesis; terpenoid biosynthesis. It participates in mycotoxin biosynthesis. Functionally, cytochrome P450 monooxygenase; part of the gene cluster that mediates the biosynthesis of the neurotoxin verrucosidin, a methylated alpha-pyrone polyketide that inhibits oxidative phosphorylation in mitochondria and thereby causes neurological diseases. The carbon backbone of verrucosidin is synthesized by the HR-PKS verA, and further modified by the other verrucodidin cluster enzymes. The protein is Cytochrome P450 monooxygenase verH of Penicillium polonicum.